Consider the following 64-residue polypeptide: uncharacterized protein (64 aa).

The interval 1–64 is disordered; sequence MMITRGWEGW…LDPAISRSSS (64 aa). The span at 16 to 28 shows a compositional bias: gly residues; that stretch reads RGAGTGTGLGGPG.

This is an uncharacterized protein from Homo sapiens (Human).